Reading from the N-terminus, the 857-residue chain is Putative serine/threonine-protein kinase receptor (857 aa).

An N-terminal signal peptide occupies residues 1–32; that stretch reads MKGARNIYHHSYMSFLLVFVVMILIHPALSIY. At 33 to 446 the chain is on the extracellular side; that stretch reads INTLSSTESL…IAKKRNASGK (414 aa). Residues 35–155 form the Bulb-type lectin domain; that stretch reads TLSSTESLTI…SNNDASEYLW (121 aa). N-linked (GlcNAc...) asparagine glycans are attached at residues Asn-47, Asn-120, Asn-196, Asn-260, Asn-389, and Asn-442. In terms of domain architecture, PAN spans 350-433; sequence CSGDGFTRMK…DGQDLYVRLA (84 aa). Intrachain disulfides connect Cys-380-Cys-405 and Cys-388-Cys-390. A helical membrane pass occupies residues 447–466; that stretch reads IISLTVGVSVLLLLIMFCLW. At 467–857 the chain is on the cytoplasmic side; that stretch reads KRKQKRAKAS…QYTCSVIDAR (391 aa). Residues 528 to 779 enclose the Protein kinase domain; sequence FSSCNKLGQG…PSIFQPQEVL (252 aa). ATP is bound by residues 534-542 and Lys-556; that span reads LGQGGFGIV. Asp-653 functions as the Proton acceptor in the catalytic mechanism.

This sequence belongs to the protein kinase superfamily. Ser/Thr protein kinase family. Predominantly in the pistil and anther.

The protein localises to the membrane. The enzyme catalyses L-seryl-[protein] + ATP = O-phospho-L-seryl-[protein] + ADP + H(+). The catalysed reaction is L-threonyl-[protein] + ATP = O-phospho-L-threonyl-[protein] + ADP + H(+). In terms of biological role, involved in sporophytic self-incompatibility system (the inability of flowering plants to achieve self-fertilization), probably acting in combination with S-locus-specific glycoproteins. Interaction with a ligand in the extracellular domain triggers the protein kinase activity of the cytoplasmic domain. The polypeptide is Putative serine/threonine-protein kinase receptor (SRK6) (Brassica oleracea var. viridis (Flowering kale)).